The chain runs to 504 residues: MEEFQGYLELDKSRQHDFLYPLIFQEYIYALAHDHGLNRSILLENVCYDNKSSSLIVKRLIXRMYQQNHLIISVNDSNQNPFLGHNKNLYSQMISEGFAVIVEIPFSLRSVSSLEGKEIXQSHNLXSIHSIFPFLEDKFLHLNYVSDILIPHPIHLEILVQTLRYWVKDASSLHLFLFFFYEYYXWNSLIXPXKSISXFSXXXXXXXXXXXXXXXXXXXXXXXFFRNQSSYLRSTSSGALLERIYFYGKIKHLVEVFVNDFQAILWLFKDPFMHYVRYQGKSILASKGTPLLMNKWKYYLVNFWQCHFYVWSQPGRIYINQLSNHSFDFLGYLSSVGLNPSVVRSQMLENSFIIDNAIKKFDIIVPIIPLIGSLAKAKFCNVLGHPISKPARADSSDSDIIDRFVRICRNLSHYHSGSSKKKSLYRIKYILRLSCARTLARKHKSTVRAFLKRLGSGLLEEFLTEEEQVLSLIFPKASSTSRRLYRGRIWYFDIISINDLANHE.

Belongs to the intron maturase 2 family. MatK subfamily.

It is found in the plastid. Its subcellular location is the chloroplast. Usually encoded in the trnK tRNA gene intron. Probably assists in splicing its own and other chloroplast group II introns. The sequence is that of Maturase K from Hamamelis mollis (Chinese witch hazel).